A 94-amino-acid chain; its full sequence is Pyrimidine/purine nucleoside phosphorylase (94 aa).

This sequence belongs to the nucleoside phosphorylase PpnP family.

It carries out the reaction a purine D-ribonucleoside + phosphate = a purine nucleobase + alpha-D-ribose 1-phosphate. It catalyses the reaction adenosine + phosphate = alpha-D-ribose 1-phosphate + adenine. The catalysed reaction is cytidine + phosphate = cytosine + alpha-D-ribose 1-phosphate. The enzyme catalyses guanosine + phosphate = alpha-D-ribose 1-phosphate + guanine. It carries out the reaction inosine + phosphate = alpha-D-ribose 1-phosphate + hypoxanthine. It catalyses the reaction thymidine + phosphate = 2-deoxy-alpha-D-ribose 1-phosphate + thymine. The catalysed reaction is uridine + phosphate = alpha-D-ribose 1-phosphate + uracil. The enzyme catalyses xanthosine + phosphate = alpha-D-ribose 1-phosphate + xanthine. Its function is as follows. Catalyzes the phosphorolysis of diverse nucleosides, yielding D-ribose 1-phosphate and the respective free bases. Can use uridine, adenosine, guanosine, cytidine, thymidine, inosine and xanthosine as substrates. Also catalyzes the reverse reactions. The polypeptide is Pyrimidine/purine nucleoside phosphorylase (Pseudomonas putida (strain W619)).